Here is a 119-residue protein sequence, read N- to C-terminus: Beta-2-microglobulin (119 aa).

The signal sequence occupies residues methionine 1–alanine 20. The Ig-like C1-type domain occupies proline 25 to lysine 114. Cysteine 45 and cysteine 100 are joined by a disulfide.

This sequence belongs to the beta-2-microglobulin family. In terms of assembly, heterodimer of an alpha chain and a beta chain. Beta-2-microglobulin is the beta-chain of major histocompatibility complex class I molecules.

Its subcellular location is the secreted. In terms of biological role, component of the class I major histocompatibility complex (MHC). Involved in the presentation of peptide antigens to the immune system. The polypeptide is Beta-2-microglobulin (B2M) (Cebuella pygmaea (Pygmy marmoset)).